Reading from the N-terminus, the 215-residue chain is Beta-crystallin A3 (215 aa).

Residues 1–30 (MGEAAVPPELDTFPAAKMAQTNPLPVPMGP) form an N-terminal arm region. 2 Beta/gamma crystallin 'Greek key' domains span residues 31-70 (WKIT…KVEC) and 71-117 (GAWV…RPVC). Positions 118-123 (SANHKE) are connecting peptide. 2 Beta/gamma crystallin 'Greek key' domains span residues 124–165 (SKIT…KIPC) and 166–214 (GAWV…RRIQ).

The protein belongs to the beta/gamma-crystallin family. Homo/heterodimer, or complexes of higher-order. The structure of beta-crystallin oligomers seems to be stabilized through interactions between the N-terminal arms.

Functionally, crystallins are the dominant structural components of the vertebrate eye lens. The polypeptide is Beta-crystallin A3 (CRYBA1) (Gallus gallus (Chicken)).